Consider the following 457-residue polypeptide: Argininosuccinate lyase (457 aa).

This sequence belongs to the lyase 1 family. Argininosuccinate lyase subfamily.

It is found in the cytoplasm. It carries out the reaction 2-(N(omega)-L-arginino)succinate = fumarate + L-arginine. Its pathway is amino-acid biosynthesis; L-arginine biosynthesis; L-arginine from L-ornithine and carbamoyl phosphate: step 3/3. The protein is Argininosuccinate lyase of Pasteurella multocida (strain Pm70).